A 273-amino-acid polypeptide reads, in one-letter code: Endoplasmic reticulum resident protein 27 (273 aa).

An N-terminal signal peptide occupies residues 1–25 (MEAAPSRFMFLLFLLTCELAAEVAA). The Thioredoxin domain occupies 39–152 (EPTWLTDVPA…MVTEYNPVTV (114 aa)). An N-linked (GlcNAc...) asparagine glycan is attached at asparagine 100. Residues 230–233 (DEWD) are PDIA3-binding site. The short motif at 270-273 (KVEL) is the Prevents secretion from ER element.

This sequence belongs to the protein disulfide isomerase family. Interacts with PDIA3.

Its subcellular location is the endoplasmic reticulum lumen. Specifically binds unfolded proteins and may recruit protein disulfide isomerase PDIA3 to unfolded substrates. Binds protein substrates via a hydrophobic pocket in the C-terminal domain. May play a role in the unfolded stress response. The polypeptide is Endoplasmic reticulum resident protein 27 (ERP27) (Homo sapiens (Human)).